Reading from the N-terminus, the 743-residue chain is Tegument protein UL46 homolog (743 aa).

Disordered regions lie at residues 437-481 (GCPP…VSSA), 522-590 (HQRS…SGYM), and 693-743 (RVRL…VSSL). Residues 526 to 552 (DSSSSDNSSCSSTETEYITISSTPSPT) are compositionally biased toward low complexity. 2 stretches are compositionally biased toward polar residues: residues 573–586 (QPAN…SPAN) and 697–716 (GTTT…TPSS). Over residues 722–743 (RTLSTSESPESSPEQQERVSSL) the composition is skewed to low complexity.

The protein belongs to the herpesviridae HHV-1 VP11/12 protein family. As to quaternary structure, interacts with VP16.

It localises to the virion tegument. The protein resides in the host cell membrane. Abundant tegument protein. Trans-activates the immediate early genes. This is Tegument protein UL46 homolog from Equus caballus (Horse).